A 360-amino-acid chain; its full sequence is Phosphate acyltransferase (360 aa).

This sequence belongs to the PlsX family. In terms of assembly, homodimer. Probably interacts with PlsY.

Its subcellular location is the cytoplasm. The catalysed reaction is a fatty acyl-[ACP] + phosphate = an acyl phosphate + holo-[ACP]. The protein operates within lipid metabolism; phospholipid metabolism. Functionally, catalyzes the reversible formation of acyl-phosphate (acyl-PO(4)) from acyl-[acyl-carrier-protein] (acyl-ACP). This enzyme utilizes acyl-ACP as fatty acyl donor, but not acyl-CoA. The chain is Phosphate acyltransferase from Caulobacter vibrioides (strain ATCC 19089 / CIP 103742 / CB 15) (Caulobacter crescentus).